Consider the following 1711-residue polypeptide: Hybrid PKS-NRPS synthetase TAS1 (1711 aa).

The segment at A43 to V397 is condensation (C) domain. Residues Q506–N907 form an adenylation (A) domain region. A Carrier 1 domain is found at L1043–R1119. S1079 is modified (O-(pantetheine 4'-phosphoryl)serine). A compositionally biased stretch (polar residues) spans L1114–T1127. The segment at L1114 to D1159 is disordered. Residues V1128–T1140 show a composition bias toward basic residues. The Carrier 2 domain maps to D1159–T1236. S1195 carries the O-(pantetheine 4'-phosphoryl)serine modification. A Ketosynthase family 3 (KS3) domain is found at R1266 to A1683. Catalysis depends on for beta-ketoacyl synthase activity residues C1429, H1565, and N1608.

This sequence in the N-terminal section; belongs to the NRP synthetase family. The cofactor is pantetheine 4'-phosphate.

The enzyme catalyses acetoacetyl-CoA + L-isoleucine + ATP = tenuazonic acid + AMP + diphosphate + CoA + 2 H(+). Hybrid PKS-NRPS synthetase that mediates the biosynthesis of the toxin tenuazonic acid (TeA), an inhibitor of protein biosynthesis on ribosomes by suppressing the release of new protein. TAS1 alone is sufficient for TeA synthesis via the condensation of isoleucine (Ile) with acetoacetyl-CoA by the N-terminal NRPS module and subsequent cyclization conducted by the C-terminal KS domain. The sequence is that of Hybrid PKS-NRPS synthetase TAS1 from Botryobasidium botryosum (strain FD-172 SS1).